A 474-amino-acid polypeptide reads, in one-letter code: Protein nucleotidyltransferase YdiU (474 aa).

Residues Gly-89, Gly-91, Arg-92, Lys-112, Asp-124, Gly-125, Arg-175, and Arg-182 each coordinate ATP. Catalysis depends on Asp-256, which acts as the Proton acceptor. Residues Asn-257 and Asp-266 each coordinate Mg(2+). Residue Asp-266 participates in ATP binding.

Belongs to the SELO family. Mg(2+) serves as cofactor. It depends on Mn(2+) as a cofactor.

The enzyme catalyses L-seryl-[protein] + ATP = 3-O-(5'-adenylyl)-L-seryl-[protein] + diphosphate. The catalysed reaction is L-threonyl-[protein] + ATP = 3-O-(5'-adenylyl)-L-threonyl-[protein] + diphosphate. It carries out the reaction L-tyrosyl-[protein] + ATP = O-(5'-adenylyl)-L-tyrosyl-[protein] + diphosphate. It catalyses the reaction L-histidyl-[protein] + UTP = N(tele)-(5'-uridylyl)-L-histidyl-[protein] + diphosphate. The enzyme catalyses L-seryl-[protein] + UTP = O-(5'-uridylyl)-L-seryl-[protein] + diphosphate. The catalysed reaction is L-tyrosyl-[protein] + UTP = O-(5'-uridylyl)-L-tyrosyl-[protein] + diphosphate. Nucleotidyltransferase involved in the post-translational modification of proteins. It can catalyze the addition of adenosine monophosphate (AMP) or uridine monophosphate (UMP) to a protein, resulting in modifications known as AMPylation and UMPylation. The protein is Protein nucleotidyltransferase YdiU of Corynebacterium glutamicum (strain R).